The primary structure comprises 301 residues: tRNA dimethylallyltransferase (301 aa).

Residue 8-15 coordinates ATP; sequence GPTAVGKT. 10–15 lines the substrate pocket; sequence TAVGKT. The tract at residues 33–36 is interaction with substrate tRNA; the sequence is DSRQ.

Belongs to the IPP transferase family. In terms of assembly, monomer. Mg(2+) is required as a cofactor.

The catalysed reaction is adenosine(37) in tRNA + dimethylallyl diphosphate = N(6)-dimethylallyladenosine(37) in tRNA + diphosphate. Functionally, catalyzes the transfer of a dimethylallyl group onto the adenine at position 37 in tRNAs that read codons beginning with uridine, leading to the formation of N6-(dimethylallyl)adenosine (i(6)A). The polypeptide is tRNA dimethylallyltransferase (Thermosipho melanesiensis (strain DSM 12029 / CIP 104789 / BI429)).